Consider the following 619-residue polypeptide: Dihydroxy-acid dehydratase 1 (619 aa).

Asp81 contacts Mg(2+). Cys122 contacts [2Fe-2S] cluster. 2 residues coordinate Mg(2+): Asp123 and Lys124. Lys124 is subject to N6-carboxylysine. Residue Cys198 coordinates [2Fe-2S] cluster. Residue Glu494 coordinates Mg(2+). Ser520 acts as the Proton acceptor in catalysis.

This sequence belongs to the IlvD/Edd family. In terms of assembly, homodimer. The cofactor is [2Fe-2S] cluster. It depends on Mg(2+) as a cofactor.

It carries out the reaction (2R)-2,3-dihydroxy-3-methylbutanoate = 3-methyl-2-oxobutanoate + H2O. The enzyme catalyses (2R,3R)-2,3-dihydroxy-3-methylpentanoate = (S)-3-methyl-2-oxopentanoate + H2O. Its pathway is amino-acid biosynthesis; L-isoleucine biosynthesis; L-isoleucine from 2-oxobutanoate: step 3/4. It functions in the pathway amino-acid biosynthesis; L-valine biosynthesis; L-valine from pyruvate: step 3/4. Its function is as follows. Functions in the biosynthesis of branched-chain amino acids. Catalyzes the dehydration of (2R,3R)-2,3-dihydroxy-3-methylpentanoate (2,3-dihydroxy-3-methylvalerate) into 2-oxo-3-methylpentanoate (2-oxo-3-methylvalerate) and of (2R)-2,3-dihydroxy-3-methylbutanoate (2,3-dihydroxyisovalerate) into 2-oxo-3-methylbutanoate (2-oxoisovalerate), the penultimate precursor to L-isoleucine and L-valine, respectively. This is Dihydroxy-acid dehydratase 1 from Bordetella pertussis (strain Tohama I / ATCC BAA-589 / NCTC 13251).